The sequence spans 553 residues: Dihydroxy-acid dehydratase (553 aa).

D78 is a Mg(2+) binding site. Residue C119 coordinates [2Fe-2S] cluster. Residues D120 and K121 each contribute to the Mg(2+) site. K121 carries the post-translational modification N6-carboxylysine. Position 191 (C191) interacts with [2Fe-2S] cluster. Position 442 (E442) interacts with Mg(2+). S468 functions as the Proton acceptor in the catalytic mechanism.

Belongs to the IlvD/Edd family. As to quaternary structure, homodimer. [2Fe-2S] cluster is required as a cofactor. It depends on Mg(2+) as a cofactor.

The enzyme catalyses (2R)-2,3-dihydroxy-3-methylbutanoate = 3-methyl-2-oxobutanoate + H2O. It catalyses the reaction (2R,3R)-2,3-dihydroxy-3-methylpentanoate = (S)-3-methyl-2-oxopentanoate + H2O. The protein operates within amino-acid biosynthesis; L-isoleucine biosynthesis; L-isoleucine from 2-oxobutanoate: step 3/4. Its pathway is amino-acid biosynthesis; L-valine biosynthesis; L-valine from pyruvate: step 3/4. Functions in the biosynthesis of branched-chain amino acids. Catalyzes the dehydration of (2R,3R)-2,3-dihydroxy-3-methylpentanoate (2,3-dihydroxy-3-methylvalerate) into 2-oxo-3-methylpentanoate (2-oxo-3-methylvalerate) and of (2R)-2,3-dihydroxy-3-methylbutanoate (2,3-dihydroxyisovalerate) into 2-oxo-3-methylbutanoate (2-oxoisovalerate), the penultimate precursor to L-isoleucine and L-valine, respectively. This chain is Dihydroxy-acid dehydratase, found in Carboxydothermus hydrogenoformans (strain ATCC BAA-161 / DSM 6008 / Z-2901).